The following is a 391-amino-acid chain: Phosphoglycerate kinase (391 aa).

Substrate contacts are provided by residues 21 to 23, Arg-36, 59 to 62, Arg-113, and Arg-146; these read DLN and HLGR. Residues Lys-197, Glu-319, and 345–348 contribute to the ATP site; that span reads GGDT.

This sequence belongs to the phosphoglycerate kinase family. As to quaternary structure, monomer.

Its subcellular location is the cytoplasm. It catalyses the reaction (2R)-3-phosphoglycerate + ATP = (2R)-3-phospho-glyceroyl phosphate + ADP. It participates in carbohydrate degradation; glycolysis; pyruvate from D-glyceraldehyde 3-phosphate: step 2/5. In Shewanella baltica (strain OS185), this protein is Phosphoglycerate kinase.